A 118-amino-acid polypeptide reads, in one-letter code: DNA-binding protein Msm_0708 (118 aa).

Positions glutamate 16–alanine 39 are disordered. Residues arginine 18–alanine 39 are compositionally biased toward low complexity.

This sequence belongs to the PDCD5 family.

This chain is DNA-binding protein Msm_0708, found in Methanobrevibacter smithii (strain ATCC 35061 / DSM 861 / OCM 144 / PS).